Here is a 726-residue protein sequence, read N- to C-terminus: Catalase-peroxidase (726 aa).

The signal sequence occupies residues 1-16; that stretch reads MDNPTDSAGKCPVAHG. A disordered region spans residues 1 to 26; it reads MDNPTDSAGKCPVAHGNTPRSRSNRD. Positions 96-218 form a cross-link, tryptophyl-tyrosyl-methioninium (Trp-Tyr) (with M-244); it reads WHSAGTYRIT…LGAVQMGLIY (123 aa). Catalysis depends on His97, which acts as the Proton acceptor. The segment at residues 218 to 244 is a cross-link (tryptophyl-tyrosyl-methioninium (Tyr-Met) (with W-96)); it reads YVNPEGPNGTPDPLASARDIRETFARM. His259 provides a ligand contact to heme b.

The protein belongs to the peroxidase family. Peroxidase/catalase subfamily. As to quaternary structure, homodimer or homotetramer. It depends on heme b as a cofactor. In terms of processing, formation of the three residue Trp-Tyr-Met cross-link is important for the catalase, but not the peroxidase activity of the enzyme.

It carries out the reaction H2O2 + AH2 = A + 2 H2O. The enzyme catalyses 2 H2O2 = O2 + 2 H2O. Its function is as follows. Bifunctional enzyme with both catalase and broad-spectrum peroxidase activity. In Rhizobium johnstonii (strain DSM 114642 / LMG 32736 / 3841) (Rhizobium leguminosarum bv. viciae), this protein is Catalase-peroxidase.